A 280-amino-acid chain; its full sequence is Bifunctional protein FolD (280 aa).

NADP(+) is bound by residues 161–163, Ser186, and Ile227; that span reads GRS.

The protein belongs to the tetrahydrofolate dehydrogenase/cyclohydrolase family. As to quaternary structure, homodimer.

It catalyses the reaction (6R)-5,10-methylene-5,6,7,8-tetrahydrofolate + NADP(+) = (6R)-5,10-methenyltetrahydrofolate + NADPH. It carries out the reaction (6R)-5,10-methenyltetrahydrofolate + H2O = (6R)-10-formyltetrahydrofolate + H(+). It participates in one-carbon metabolism; tetrahydrofolate interconversion. Catalyzes the oxidation of 5,10-methylenetetrahydrofolate to 5,10-methenyltetrahydrofolate and then the hydrolysis of 5,10-methenyltetrahydrofolate to 10-formyltetrahydrofolate. This chain is Bifunctional protein FolD, found in Caldanaerobacter subterraneus subsp. tengcongensis (strain DSM 15242 / JCM 11007 / NBRC 100824 / MB4) (Thermoanaerobacter tengcongensis).